A 149-amino-acid chain; its full sequence is Protein K7 (149 aa).

This sequence belongs to the orthopoxvirus OPG044 family. As to quaternary structure, interacts with DDX3; this interaction inhibits DDX3 and suppresses DDX3-mediated IFN-beta promoter induction. Interacts with TRAF6 and IRAK2; these interactions suppress TLR-dependent NF-KappaB activation.

It is found in the host cytoplasm. Functionally, virulence factor that affects the acute immune response to infection. Bcl-2-like protein which, through its interaction with the DEAD box RNA helicase DDX3X/DDX3, prevents TBK1/IKKepsilon-mediated IRF3 activation. Contributes to virulence by binding to the host TRAF6 and IRAK2 and preventing host NF-kappa-B activation. The sequence is that of Protein K7 (OPG044) from Homo sapiens (Human).